Consider the following 478-residue polypeptide: Dynein regulatory complex subunit 4 (478 aa).

A compositionally biased stretch (basic residues) spans 1-12; the sequence is MAPKKKGKKGKA. Residues 1-33 are disordered; sequence MAPKKKGKKGKAKGTPIVDGLAPEDMSKEQVEE. The segment at 1-114 is regulates microtubule-binding; the sequence is MAPKKKGKKG…LLYEHQNNLT (114 aa). The tract at residues 115-258 is microtubule-binding; the sequence is EMKAEGTVVM…NSLKEQMEDM (144 aa). A coiled-coil region spans residues 242–427; it reads LNNLALINSL…KDLQYELAQV (186 aa). An interaction with SMO region spans residues 357-478; it reads QQKTGFKNLV…GPAGLVGTPT (122 aa).

It belongs to the DRC4 family. As to quaternary structure, component of the nexin-dynein regulatory complex (N-DRC). Interacts with microtubules. Interacts with SMO. Interacts (via coiled-coil domains) with RAB3B (in GTP-bound form). Interacts with DRC1. Interacts with DRC7. In terms of tissue distribution, expressed in respiratory epithelial cells (at protein level). Expressed in the heart, skeletal muscle, pancreas, liver, brain, trachea and lung. Weakly or not expressed in placenta and kidney.

It localises to the cytoplasm. The protein resides in the cytoskeleton. Its subcellular location is the cell projection. It is found in the cilium. The protein localises to the flagellum. It localises to the cilium axoneme. The protein resides in the cilium basal body. Its subcellular location is the golgi apparatus. It is found in the flagellum axoneme. Functionally, component of the nexin-dynein regulatory complex (N-DRC), a key regulator of ciliary/flagellar motility which maintains the alignment and integrity of the distal axoneme and regulates microtubule sliding in motile axonemes. Plays an important role in the assembly of the N-DRC linker. Plays dual roles at both the primary (or non-motile) cilia to regulate hedgehog signaling and in motile cilia to coordinate cilia movement. Required for proper motile cilia functioning. Positively regulates ciliary smoothened (SMO)-dependent Hedgehog (Hh) signaling pathway by facilitating the trafficking of SMO into the cilium and the stimulation of SMO activity in a GRK2-dependent manner. In Homo sapiens (Human), this protein is Dynein regulatory complex subunit 4 (GAS8).